The following is a 435-amino-acid chain: Trigger factor (435 aa).

Residues Gly-163–Pro-248 enclose the PPIase FKBP-type domain.

It belongs to the FKBP-type PPIase family. Tig subfamily.

It localises to the cytoplasm. The catalysed reaction is [protein]-peptidylproline (omega=180) = [protein]-peptidylproline (omega=0). Functionally, involved in protein export. Acts as a chaperone by maintaining the newly synthesized protein in an open conformation. Functions as a peptidyl-prolyl cis-trans isomerase. The polypeptide is Trigger factor (Maridesulfovibrio salexigens (strain ATCC 14822 / DSM 2638 / NCIMB 8403 / VKM B-1763) (Desulfovibrio salexigens)).